Reading from the N-terminus, the 283-residue chain is Phosphatidylglycerol--prolipoprotein diacylglyceryl transferase (283 aa).

4 consecutive transmembrane segments (helical) span residues 19 to 39 (IGPI…LIGV), 59 to 79 (LSIW…VLFQ), 90 to 110 (IIAI…GTLA), and 120 to 140 (VPFW…QAIG). Position 141 (Arg141) interacts with a 1,2-diacyl-sn-glycero-3-phospho-(1'-sn-glycerol). 3 helical membrane-spanning segments follow: residues 181–201 (TFLY…TLFF), 212–232 (VGTL…WIEG), and 245–265 (IAQV…AWLY).

Belongs to the Lgt family.

It localises to the cell inner membrane. The enzyme catalyses L-cysteinyl-[prolipoprotein] + a 1,2-diacyl-sn-glycero-3-phospho-(1'-sn-glycerol) = an S-1,2-diacyl-sn-glyceryl-L-cysteinyl-[prolipoprotein] + sn-glycerol 1-phosphate + H(+). Its pathway is protein modification; lipoprotein biosynthesis (diacylglyceryl transfer). Catalyzes the transfer of the diacylglyceryl group from phosphatidylglycerol to the sulfhydryl group of the N-terminal cysteine of a prolipoprotein, the first step in the formation of mature lipoproteins. The polypeptide is Phosphatidylglycerol--prolipoprotein diacylglyceryl transferase (Nostoc sp. (strain PCC 7120 / SAG 25.82 / UTEX 2576)).